Consider the following 118-residue polypeptide: Large ribosomal subunit protein uL18 (118 aa).

It belongs to the universal ribosomal protein uL18 family. Part of the 50S ribosomal subunit; part of the 5S rRNA/L5/L18/L25 subcomplex. Contacts the 5S and 23S rRNAs.

This is one of the proteins that bind and probably mediate the attachment of the 5S RNA into the large ribosomal subunit, where it forms part of the central protuberance. In Campylobacter jejuni subsp. jejuni serotype O:6 (strain 81116 / NCTC 11828), this protein is Large ribosomal subunit protein uL18.